Here is a 717-residue protein sequence, read N- to C-terminus: Scinderin (717 aa).

Residues 1–363 (MAPERHPPAF…DGFGKVYVTE (363 aa)) form an actin-severing region. Residues 28–108 (ELVPVPPSRH…IQGYESNEFV (81 aa)) form a Gelsolin-like 1 repeat. Residues 112–119 (KGGIKYKA) and 138–146 (RLLHIKGRR) contribute to the a 1,2-diacyl-sn-glycero-3-phospho-(1D-myo-inositol-4,5-bisphosphate) site. 5 Gelsolin-like repeats span residues 148–220 (VRAT…PDEL), 265–340 (VVAE…TPIF), 408–483 (RVPV…PHLL), 526–590 (AEVD…EEFW), and 628–703 (IEEV…PPTF). Residues 364–715 (RVAKIEQIEF…WFLAWDSNKW (352 aa)) form a ca(2+)-dependent actin binding region. Residues Asn538, Asp539, Glu562, Asp643, Asp644, and Glu666 each contribute to the Ca(2+) site.

It belongs to the villin/gelsolin family.

The protein resides in the cytoplasm. It localises to the cytoskeleton. The protein localises to the cell projection. It is found in the podosome. Functionally, ca(2+)-dependent actin filament-severing protein that has a regulatory function in exocytosis by affecting the organization of the microfilament network underneath the plasma membrane. In vitro, also has barbed end capping and nucleating activities in the presence of Ca(2+). Severing activity is inhibited by phosphatidylinositol 4,5-bis-phosphate (PIP2). Required for megakaryocyte differentiation, maturation, polyploidization and apoptosis with the release of platelet-like particles. Plays a role in osteoclastogenesis (OCG) and actin cytoskeletal organization in osteoclasts. Regulates chondrocyte proliferation and differentiation. Inhibits cell proliferation and tumorigenesis. Signaling is mediated by MAPK, p38 and JNK pathways. The chain is Scinderin (SCIN) from Gallus gallus (Chicken).